The following is a 565-amino-acid chain: Oxygen-dependent choline dehydrogenase (565 aa).

FAD is bound at residue aspartate 6–glutamate 35. A disordered region spans residues glutamine 182–alanine 203. Histidine 475 (proton acceptor) is an active-site residue.

This sequence belongs to the GMC oxidoreductase family. It depends on FAD as a cofactor.

It carries out the reaction choline + A = betaine aldehyde + AH2. It catalyses the reaction betaine aldehyde + NAD(+) + H2O = glycine betaine + NADH + 2 H(+). It functions in the pathway amine and polyamine biosynthesis; betaine biosynthesis via choline pathway; betaine aldehyde from choline (cytochrome c reductase route): step 1/1. Its function is as follows. Involved in the biosynthesis of the osmoprotectant glycine betaine. Catalyzes the oxidation of choline to betaine aldehyde and betaine aldehyde to glycine betaine at the same rate. This is Oxygen-dependent choline dehydrogenase from Pseudomonas entomophila (strain L48).